The following is a 475-amino-acid chain: MASATASISSHSVALRDLKAARIGAVKQQVAAAPAAGTAAARAQRARAVRPLRAAEPARQPVSASAAAAPAAAPVAEDAAAAAVDAPAPAVDYEALAQELQGASPLEIMDRALAMFGSDIAIAFSGAEDVALIEYAKLTGRPFRVFSLDTGRLNPETYQLFDKVEKHYGIRIEYMFPDAGEVQALVRAKGLFSFYEDGHQECCRARKVRPLRRALRGLRAWITGQRKDQSPGTRAAIPVVQVDPSFEGLAGGAGSLVKWNPVANVDGKDVWTFLRAMDVPVNALHAQGYVSIGCEPCTRPVLPGQHEREGRWWWEDAKAKECGLHKGNIDDQGGAAAAAAHKAGGANGNGSAGAPDIFESSGVVSLTRAGVENLLRLESRAEPWLVVLYAPWCPFCQAMEASYLELAERLGGAGGGVKVGKFRADGEQKAFAQQELQLQSFPTILLFPSRTARPIKYPSEKRDVDSLLAFVNSLR.

Residues M1 to S63 constitute a chloroplast transit peptide. The segment at A72–G327 is reductase domain. One can recognise a Thioredoxin domain in the interval H341 to R475. Catalysis depends on nucleophile residues C393 and C396. A disulfide bridge connects residues C393 and C396.

It belongs to the APS reductase family. [4Fe-4S] cluster serves as cofactor.

It is found in the plastid. The protein resides in the chloroplast. The catalysed reaction is glutathione disulfide + sulfite + AMP + 2 H(+) = adenosine 5'-phosphosulfate + 2 glutathione. Its function is as follows. Reduces sulfate for Cys biosynthesis. The protein is Probable 5'-adenylylsulfate reductase 1, chloroplastic (APR1) of Oryza sativa subsp. japonica (Rice).